We begin with the raw amino-acid sequence, 353 residues long: Protein RecA (353 aa).

Residue 67-74 (GPESSGKT) coordinates ATP.

The protein belongs to the RecA family.

It is found in the cytoplasm. Can catalyze the hydrolysis of ATP in the presence of single-stranded DNA, the ATP-dependent uptake of single-stranded DNA by duplex DNA, and the ATP-dependent hybridization of homologous single-stranded DNAs. It interacts with LexA causing its activation and leading to its autocatalytic cleavage. The chain is Protein RecA from Shewanella woodyi (strain ATCC 51908 / MS32).